The primary structure comprises 173 residues: Peptide deformylase (173 aa).

Fe cation is bound by residues Cys-91 and His-133. Glu-134 is a catalytic residue. His-137 contacts Fe cation.

This sequence belongs to the polypeptide deformylase family. Requires Fe(2+) as cofactor.

The catalysed reaction is N-terminal N-formyl-L-methionyl-[peptide] + H2O = N-terminal L-methionyl-[peptide] + formate. Its function is as follows. Removes the formyl group from the N-terminal Met of newly synthesized proteins. Requires at least a dipeptide for an efficient rate of reaction. N-terminal L-methionine is a prerequisite for activity but the enzyme has broad specificity at other positions. The sequence is that of Peptide deformylase from Blochmanniella pennsylvanica (strain BPEN).